Here is a 146-residue protein sequence, read N- to C-terminus: Hemoglobin cathodic subunit beta (146 aa).

The region spanning 2–146 (EWSASERSTI…VVSALSKQYF (145 aa)) is the Globin domain. Histidine 63 and histidine 92 together coordinate heme b.

It belongs to the globin family. In terms of assembly, heterotetramer of two alpha chains and two beta chains. Red blood cells.

Involved in oxygen transport from gills to the various peripheral tissues. The polypeptide is Hemoglobin cathodic subunit beta (hbb2) (Anguilla anguilla (European freshwater eel)).